Here is a 302-residue protein sequence, read N- to C-terminus: DNA-binding transcriptional activator HetR (302 aa).

The active site involves Ser153.

Belongs to the peptidase S48 family. As to quaternary structure, homodimer; disulfide-linked.

Its function is as follows. Might be involved in temporal and/or spatial regulation of nitrogen fixation. Dimerization is required for DNA-binding. Has both a protease and a DNA-binding activity. The protein is DNA-binding transcriptional activator HetR of Trichodesmium erythraeum (strain IMS101).